A 567-amino-acid chain; its full sequence is PCNA-interacting partner (567 aa).

A disordered region spans residues 485–552 (IDLKTAEQVK…GVSRNKASKN (68 aa)). Polar residues-rich tracts occupy residues 512–524 (DIQS…QENE) and 534–552 (LTSS…ASKN).

This sequence belongs to the PARI family.

Its subcellular location is the cytoplasm. It is found in the nucleus. In terms of biological role, required to suppress inappropriate homologous recombination, thereby playing a central role DNA repair and in the maintenance of genomic stability. The protein is PCNA-interacting partner (parpbp) of Xenopus laevis (African clawed frog).